We begin with the raw amino-acid sequence, 247 residues long: Acetate transporter protein patA (247 aa).

N-linked (GlcNAc...) asparagine glycosylation is present at Asn-20. The next 6 helical transmembrane spans lie at 37–57 (PPIT…AIAF), 71–91 (AITN…LVLV), 106–126 (VFGG…PAFG), 141–161 (ALGY…IAAM), 169–189 (AMLG…FAMA), and 202–222 (AAGA…AHLM).

The protein belongs to the acetate uptake transporter (AceTr) (TC 2.A.96) family.

The protein localises to the endoplasmic reticulum membrane. The protein operates within mycotoxin biosynthesis; patulin biosynthesis. Functionally, acetate transporter protein; part of the gene cluster that mediates the biosynthesis of patulin, an acetate-derived tetraketide mycotoxin produced by several fungal species that shows antimicrobial properties against several bacteria. May be involved in the uptake of acetate, a substrate for the synthesis of 6-methylsalicylic acid by the polyketide synthase patK. The chain is Acetate transporter protein patA from Aspergillus clavatus (strain ATCC 1007 / CBS 513.65 / DSM 816 / NCTC 3887 / NRRL 1 / QM 1276 / 107).